We begin with the raw amino-acid sequence, 271 residues long: 4-hydroxy-tetrahydrodipicolinate reductase (271 aa).

Residues 10 to 15, glutamate 36, 100 to 102, and 124 to 127 contribute to the NAD(+) site; these read GAGGRM, GTT, and SGNM. Catalysis depends on histidine 157, which acts as the Proton donor/acceptor. Residue histidine 158 participates in (S)-2,3,4,5-tetrahydrodipicolinate binding. Lysine 161 (proton donor) is an active-site residue. 167 to 168 is a (S)-2,3,4,5-tetrahydrodipicolinate binding site; it reads GT.

This sequence belongs to the DapB family.

It is found in the cytoplasm. It carries out the reaction (S)-2,3,4,5-tetrahydrodipicolinate + NAD(+) + H2O = (2S,4S)-4-hydroxy-2,3,4,5-tetrahydrodipicolinate + NADH + H(+). It catalyses the reaction (S)-2,3,4,5-tetrahydrodipicolinate + NADP(+) + H2O = (2S,4S)-4-hydroxy-2,3,4,5-tetrahydrodipicolinate + NADPH + H(+). Its pathway is amino-acid biosynthesis; L-lysine biosynthesis via DAP pathway; (S)-tetrahydrodipicolinate from L-aspartate: step 4/4. Its function is as follows. Catalyzes the conversion of 4-hydroxy-tetrahydrodipicolinate (HTPA) to tetrahydrodipicolinate. The polypeptide is 4-hydroxy-tetrahydrodipicolinate reductase (Bradyrhizobium diazoefficiens (strain JCM 10833 / BCRC 13528 / IAM 13628 / NBRC 14792 / USDA 110)).